A 169-amino-acid chain; its full sequence is Endoribonuclease YbeY (169 aa).

Residues histidine 128, histidine 132, and histidine 138 each coordinate Zn(2+).

The protein belongs to the endoribonuclease YbeY family. Zn(2+) serves as cofactor.

It is found in the cytoplasm. Functionally, single strand-specific metallo-endoribonuclease involved in late-stage 70S ribosome quality control and in maturation of the 3' terminus of the 16S rRNA. This is Endoribonuclease YbeY from Cyanothece sp. (strain PCC 7425 / ATCC 29141).